A 212-amino-acid chain; its full sequence is MSLFDKKHLVSPADALPGRNTPMPVATLHAVNGHSMTNVPDGMEIAIFAMGCFWGVERLFWQLPGVYSTAAGYTGGYTPNPTYREVCSGETGHAEAVRIVYDPSVISYEQLLQVFWENHDPAQGMRQGNDHGTQYRSAIYPLTPEQDSAARASRERFQAAMIAANDDRPVTTEIANATPFYYAEDDHQQYLHKNPYGYCGIGGIGVCLPPDA.

Residue cysteine 52 is part of the active site.

It belongs to the MsrA Met sulfoxide reductase family.

It catalyses the reaction L-methionyl-[protein] + [thioredoxin]-disulfide + H2O = L-methionyl-(S)-S-oxide-[protein] + [thioredoxin]-dithiol. It carries out the reaction [thioredoxin]-disulfide + L-methionine + H2O = L-methionine (S)-S-oxide + [thioredoxin]-dithiol. In terms of biological role, has an important function as a repair enzyme for proteins that have been inactivated by oxidation. Catalyzes the reversible oxidation-reduction of methionine sulfoxide in proteins to methionine. This is Peptide methionine sulfoxide reductase MsrA from Escherichia fergusonii (strain ATCC 35469 / DSM 13698 / CCUG 18766 / IAM 14443 / JCM 21226 / LMG 7866 / NBRC 102419 / NCTC 12128 / CDC 0568-73).